A 503-amino-acid chain; its full sequence is Cytochrome P450 714C1 (503 aa).

Topologically, residues 1 to 6 are lumenal; that stretch reads MEKLLA. The chain crosses the membrane as a helical; Signal-anchor for type III membrane protein span at residues 7-27; it reads LIVVLVILLSLALFYLCNILW. The Cytoplasmic portion of the chain corresponds to 28–503; the sequence is LRAVKIRKKL…GLPLMVTKLP (476 aa). Cys-450 is a binding site for heme.

The protein belongs to the cytochrome P450 family. Heme serves as cofactor.

The protein localises to the membrane. Its function is as follows. Probably not involved in gibberellin metabolism since over-expression of CYP714C1 in a heterologous system does not induce semi-dwarfism. The polypeptide is Cytochrome P450 714C1 (CYP714C1) (Oryza sativa subsp. japonica (Rice)).